Consider the following 303-residue polypeptide: MPEVETKIIPNEKEDEDEDGYIEEEDEDFQPEKDKLGGGSDDSDASDGGDDYDDGVNRDKGRNKVDYSRIESESGGLIKTRRARQAEEEYAKTHKYESLTVESIPAKVNSIWEELQEASKNRLLSSSGKVGSVLDGSKEARSTTAAQQEDKILIERNYKFAGETVHEKKWVSRSSAEGQEYLNSLKFKQQAPAAPVQLEKAVRTKSNESRQHLRRPLKRPPLLEQIISGGLRPKLTTLEKSQLDWASYVDRAGLNDELVLHNKDGFLARQEFLQRVGSAEDERYKELRRQQLAQQLQQDSEAS.

The span at 1–12 (MPEVETKIIPNE) shows a compositional bias: basic and acidic residues. Disordered stretches follow at residues 1–92 (MPEV…EYAK), 126–146 (SSGK…TTAA), and 199–219 (EKAV…PLKR). Composition is skewed to acidic residues over residues 13-29 (KEDE…DEDF) and 41-54 (DDSD…DYDD). The segment covering 55-72 (GVNRDKGRNKVDYSRIES) has biased composition (basic and acidic residues). Low complexity predominate over residues 126–135 (SSGKVGSVLD). Residues 200-211 (KAVRTKSNESRQ) are compositionally biased toward basic and acidic residues. S209 carries the post-translational modification Phosphoserine. The BCNT-C domain occupies 217-294 (LKRPPLLEQI…KELRRQQLAQ (78 aa)).

This sequence belongs to the SWC5 family. Component of the SWR1 chromatin remodeling complex composed of at least ACT1, ARP4, RVB1, RVB2, ARP6, YAF9, VPS71, VPS72, SWC3, SWC4, SWC5, SWC7 and SWR1, and perhaps BDF1.

The protein localises to the nucleus. In terms of biological role, component of the SWR1 complex which mediates the ATP-dependent exchange of histone H2A for the H2A variant HZT1 leading to transcriptional regulation of selected genes by chromatin remodeling. Involved in chromosome stability. This Saccharomyces cerevisiae (strain ATCC 204508 / S288c) (Baker's yeast) protein is SWR1-complex protein 5 (SWC5).